The following is a 382-amino-acid chain: Saccharopine dehydrogenase [NAD(+), L-lysine-forming] (382 aa).

Arg-20 and Lys-79 together coordinate L-saccharopine. The Proton acceptor role is filled by Lys-79. His-98 (proton donor) is an active-site residue. Position 103 (Gln-103) interacts with L-saccharopine. Arg-132 provides a ligand contact to NAD(+). L-saccharopine-binding residues include Arg-133 and Phe-137. NAD(+)-binding positions include 215–216 (GR), Asp-239, Thr-243, Tyr-263, and Val-290. Cys-217 and Cys-261 are disulfide-bonded. 291 to 293 (SAD) provides a ligand contact to L-saccharopine. 330–333 (IDHL) contributes to the NAD(+) binding site.

It belongs to the AlaDH/PNT family. Monomer.

The enzyme catalyses L-saccharopine + NAD(+) + H2O = L-lysine + 2-oxoglutarate + NADH + H(+). It functions in the pathway amino-acid biosynthesis; L-lysine biosynthesis via AAA pathway; L-lysine from L-alpha-aminoadipate (fungal route): step 3/3. Its function is as follows. Catalyzes the NAD(+)-dependent cleavage of saccharopine to L-lysine and 2-oxoglutarate, the final step in the alpha-aminoadipate (AAA) pathway for lysin biosynthesis. This is Saccharopine dehydrogenase [NAD(+), L-lysine-forming] from Candida albicans (strain SC5314 / ATCC MYA-2876) (Yeast).